A 226-amino-acid chain; its full sequence is uncharacterized protein (226 aa).

It belongs to the HisA/HisF family.

This is an uncharacterized protein from Methanocaldococcus jannaschii (strain ATCC 43067 / DSM 2661 / JAL-1 / JCM 10045 / NBRC 100440) (Methanococcus jannaschii).